A 617-amino-acid polypeptide reads, in one-letter code: MALLQIAEPGQSSAPHEHKLAAGIDLGTTNSLVASVRSGDATTLNDEQGRSILPSVVNYSAESTVVGYDAKAKAEFEPENTIISVKRLIGRSLKDIQSRYPSLPYRFKESDNGLPVLQTAQGDKNPIEVSADILKALGKRAEETLGGDLAGVVITVPAYFDDAQRAGTKDAAKLAGLHVLRLLNEPTAAAIAYGLDSGQEGVIAVYDLGGGTFDISILRLSKGVFEVLATGGDSALGGDDFDHLLADYLMEQAGLEAPLSAEKNRALLNIATATKIAFSEQDSVEVDVFGWKGTVTREQFEDLIRPLVKKTLMSCRRALKDADVEAEEVLEVVMVGGSTRTLLVREMVGEFFGRTPLTSINPDEVVAIGAGIQADILAGNKPDSEMLLLDVIPLSLGIETMGGLVEKIIPRNTTIPVARAQEFTTFKDGQTAMSVHVVQGEREMVDDCRSLARFSLKGIPPMAAGAAHIRVTYQVDADGLLSVTAMEKSTGVQSEIQVKPSYGLSDNEVANMLRDSMTHAKEDMQARALAEQRVEADRVIEGLIAAMQADGDELLSEQEKQDLLKAIEALIELRNGDDANAIEQGIKDTDKASQDFASRRMDKSIRAALSGQSVDDI.

This sequence belongs to the heat shock protein 70 family.

Probable chaperone. Has a low intrinsic ATPase activity which is markedly stimulated by HscB. This chain is Chaperone protein HscA homolog, found in Vibrio parahaemolyticus serotype O3:K6 (strain RIMD 2210633).